We begin with the raw amino-acid sequence, 517 residues long: Crotonobetaine/carnitine--CoA ligase (517 aa).

It belongs to the ATP-dependent AMP-binding enzyme family.

It carries out the reaction 4-(trimethylamino)butanoate + ATP + CoA = 4-(trimethylamino)butanoyl-CoA + AMP + diphosphate. The catalysed reaction is crotonobetaine + ATP + CoA = crotonobetainyl-CoA + AMP + diphosphate. The enzyme catalyses (R)-carnitine + ATP + CoA = (R)-carnitinyl-CoA + AMP + diphosphate. It participates in amine and polyamine metabolism; carnitine metabolism. In terms of biological role, catalyzes the transfer of CoA to carnitine, generating the initial carnitinyl-CoA needed for the CaiB reaction cycle. Also has activity toward crotonobetaine and gamma-butyrobetaine. The chain is Crotonobetaine/carnitine--CoA ligase from Salmonella enteritidis PT4 (strain P125109).